A 266-amino-acid chain; its full sequence is Glucosamine-6-phosphate deaminase (266 aa).

The active-site Proton acceptor; for enolization step is the D72. Residue D141 is the For ring-opening step of the active site. H143 functions as the Proton acceptor; for ring-opening step in the catalytic mechanism. E148 (for ring-opening step) is an active-site residue.

It belongs to the glucosamine/galactosamine-6-phosphate isomerase family. NagB subfamily. Homohexamer; trimer of disulfide-linked dimers.

The enzyme catalyses alpha-D-glucosamine 6-phosphate + H2O = beta-D-fructose 6-phosphate + NH4(+). The protein operates within amino-sugar metabolism; N-acetylneuraminate degradation; D-fructose 6-phosphate from N-acetylneuraminate: step 5/5. Allosterically activated by N-acetylglucosamine 6-phosphate (GlcNAc6P). Catalyzes the reversible isomerization-deamination of glucosamine 6-phosphate (GlcN6P) to form fructose 6-phosphate (Fru6P) and ammonium ion. The sequence is that of Glucosamine-6-phosphate deaminase from Vibrio parahaemolyticus serotype O3:K6 (strain RIMD 2210633).